Reading from the N-terminus, the 477-residue chain is Cytochrome P450 708A2 (477 aa).

The helical transmembrane segment at F3–L23 threads the bilayer. A heme-binding site is contributed by C426.

It belongs to the cytochrome P450 family. The cofactor is heme. Expressed primarily in the root epidermis.

It localises to the membrane. In terms of biological role, hydroxylates thalianol into thalian-diol. This chain is Cytochrome P450 708A2 (CYP708A2), found in Arabidopsis thaliana (Mouse-ear cress).